Reading from the N-terminus, the 369-residue chain is Geranylgeranyl pyrophosphate synthase, chloroplastic (369 aa).

Isopentenyl diphosphate-binding residues include Lys118, Arg121, and His150. Positions 157 and 163 each coordinate Mg(2+). Arg168 provides a ligand contact to dimethylallyl diphosphate. Arg169 serves as a coordination point for isopentenyl diphosphate. Residues Lys254, Thr255, Gln292, Lys309, and Lys319 each contribute to the dimethylallyl diphosphate site.

This sequence belongs to the FPP/GGPP synthase family. In terms of assembly, monomer. It depends on Mg(2+) as a cofactor.

The protein localises to the plastid. The protein resides in the chloroplast. It catalyses the reaction isopentenyl diphosphate + dimethylallyl diphosphate = (2E)-geranyl diphosphate + diphosphate. The enzyme catalyses isopentenyl diphosphate + (2E)-geranyl diphosphate = (2E,6E)-farnesyl diphosphate + diphosphate. The catalysed reaction is isopentenyl diphosphate + (2E,6E)-farnesyl diphosphate = (2E,6E,10E)-geranylgeranyl diphosphate + diphosphate. It functions in the pathway isoprenoid biosynthesis; farnesyl diphosphate biosynthesis; farnesyl diphosphate from geranyl diphosphate and isopentenyl diphosphate: step 1/1. It participates in isoprenoid biosynthesis; geranyl diphosphate biosynthesis; geranyl diphosphate from dimethylallyl diphosphate and isopentenyl diphosphate: step 1/1. The protein operates within isoprenoid biosynthesis; geranylgeranyl diphosphate biosynthesis; geranylgeranyl diphosphate from farnesyl diphosphate and isopentenyl diphosphate: step 1/1. Its function is as follows. Catalyzes the trans-addition of the three molecules of IPP onto DMAPP to form geranylgeranyl pyrophosphate. This is Geranylgeranyl pyrophosphate synthase, chloroplastic from Capsicum annuum (Capsicum pepper).